A 944-amino-acid polypeptide reads, in one-letter code: Valine--tRNA ligase (944 aa).

Positions 43–53 (PNVTGTLHMGH) match the 'HIGH' region motif. A 'KMSKS' region motif is present at residues 550–554 (KMSKS). Lysine 553 lines the ATP pocket. A coiled-coil region spans residues 878 to 942 (LVDMDAERTR…QLTGLREQRA (65 aa)).

Belongs to the class-I aminoacyl-tRNA synthetase family. ValS type 1 subfamily. As to quaternary structure, monomer.

It is found in the cytoplasm. It catalyses the reaction tRNA(Val) + L-valine + ATP = L-valyl-tRNA(Val) + AMP + diphosphate. Catalyzes the attachment of valine to tRNA(Val). As ValRS can inadvertently accommodate and process structurally similar amino acids such as threonine, to avoid such errors, it has a 'posttransfer' editing activity that hydrolyzes mischarged Thr-tRNA(Val) in a tRNA-dependent manner. In Xanthomonas axonopodis pv. citri (strain 306), this protein is Valine--tRNA ligase.